A 156-amino-acid polypeptide reads, in one-letter code: Small ribosomal subunit protein uS7 (156 aa).

The protein belongs to the universal ribosomal protein uS7 family. As to quaternary structure, part of the 30S ribosomal subunit. Contacts proteins S9 and S11.

One of the primary rRNA binding proteins, it binds directly to 16S rRNA where it nucleates assembly of the head domain of the 30S subunit. Is located at the subunit interface close to the decoding center, probably blocks exit of the E-site tRNA. The protein is Small ribosomal subunit protein uS7 of Mycobacterium bovis (strain ATCC BAA-935 / AF2122/97).